The primary structure comprises 187 residues: Protein GrpE (187 aa).

The span at 1-11 (MTDSSNEHETE) shows a compositional bias: basic and acidic residues. The segment at 1–21 (MTDSSNEHETENPSLPIPDNE) is disordered.

Belongs to the GrpE family. As to quaternary structure, homodimer.

The protein resides in the cytoplasm. In terms of biological role, participates actively in the response to hyperosmotic and heat shock by preventing the aggregation of stress-denatured proteins, in association with DnaK and GrpE. It is the nucleotide exchange factor for DnaK and may function as a thermosensor. Unfolded proteins bind initially to DnaJ; upon interaction with the DnaJ-bound protein, DnaK hydrolyzes its bound ATP, resulting in the formation of a stable complex. GrpE releases ADP from DnaK; ATP binding to DnaK triggers the release of the substrate protein, thus completing the reaction cycle. Several rounds of ATP-dependent interactions between DnaJ, DnaK and GrpE are required for fully efficient folding. The polypeptide is Protein GrpE (Chlamydia caviae (strain ATCC VR-813 / DSM 19441 / 03DC25 / GPIC) (Chlamydophila caviae)).